A 156-amino-acid chain; its full sequence is uncharacterized protein (156 aa).

Positions 1–12 (MSSRFARSNGNP) are enriched in polar residues. Positions 1 to 27 (MSSRFARSNGNPNHIRKRNHSPDPIGI) are disordered. Ser-21 is modified (phosphoserine).

It localises to the cytoplasm. The protein resides in the nucleus. This is an uncharacterized protein from Saccharomyces cerevisiae (strain ATCC 204508 / S288c) (Baker's yeast).